Here is a 365-residue protein sequence, read N- to C-terminus: Caffeic acid 3-O-methyltransferase (365 aa).

Asparagine 131 contributes to the (E)-ferulate binding site. S-adenosyl-L-homocysteine-binding residues include glycine 208, aspartate 231, aspartate 251, methionine 252, methionine 264, and lysine 265. Residue histidine 269 is the Proton acceptor of the active site. (E)-5-hydroxyferulate is bound at residue aspartate 270. Catalysis depends on residues glutamate 297 and glutamate 329.

This sequence belongs to the class I-like SAM-binding methyltransferase superfamily. Cation-independent O-methyltransferase family. COMT subfamily. In terms of assembly, homodimer. In terms of tissue distribution, more abundant in roots and stems.

It carries out the reaction (E)-caffeate + S-adenosyl-L-methionine = (E)-ferulate + S-adenosyl-L-homocysteine + H(+). The catalysed reaction is (E)-5-hydroxyferulate + S-adenosyl-L-methionine = (E)-sinapate + S-adenosyl-L-homocysteine + H(+). It functions in the pathway aromatic compound metabolism; phenylpropanoid biosynthesis. Its function is as follows. Catalyzes the conversion of caffeic acid to ferulic acid and of 5-hydroxyferulic acid to sinapic acid. The resulting products may subsequently be converted to the corresponding alcohols that are incorporated into lignins. This is Caffeic acid 3-O-methyltransferase from Medicago sativa (Alfalfa).